The primary structure comprises 124 residues: Schlafen-like protein (124 aa).

This sequence belongs to the Schlafen family. Subgroup poxviridae B3 subfamily.

The chain is Schlafen-like protein from Homo sapiens (Human).